A 346-amino-acid polypeptide reads, in one-letter code: MAVYAVTGGAGFLGRYIVKLLISADDVQEIRVIDIVEDPQPITSKVKVINYIQCDINDFDKVREALDGVNLIIHTAALVDVFGKYTDNEIMKVNYYGTQTILAACVDLGIKYLIYTSSMEAIGPNKHGNPFIGHEHTLYDISPGHVYAKSKRMAEQLVMKANNSVIMNGAKLYTCCLRPTGIYGEGDKLTKVFYEQCKQHGNIMYRTVDDDAVHSRVYVGNVAWMHVLAAKYIQYPGSAIKGNAYFCYDYSPSCSYDMFNLLLMKPLGIEQGSRIPRWMLKMYACKNDMKRILFRKPSILNNYTLKISNTTFEVRTNNAELDFNYSPIFDVDVAFERTRKWLEESE.

Residue Y147 is the Proton acceptor of the active site. K151 contacts NAD(+).

It belongs to the 3-beta-HSD family.

The catalysed reaction is a 3beta-hydroxy-Delta(5)-steroid + NAD(+) = a 3-oxo-Delta(5)-steroid + NADH + H(+). The enzyme catalyses a 3-oxo-Delta(5)-steroid = a 3-oxo-Delta(4)-steroid. The protein operates within lipid metabolism; steroid biosynthesis. Functionally, catalyzes the oxidative conversion of Delta(5)-ene-3-beta-hydroxy steroid, and the oxidative conversion of ketosteroids. The 3-beta-HSD enzymatic system plays a crucial role in the biosynthesis of all classes of hormonal steroids. During viral infection, steroid production contributes to virulence by inhibiting the host inflammatory response. This Monkeypox virus protein is 3 beta-hydroxysteroid dehydrogenase/Delta 5--&gt;4-isomerase (OPG174).